A 253-amino-acid polypeptide reads, in one-letter code: Phosphate import ATP-binding protein PstB (253 aa).

In terms of domain architecture, ABC transporter spans 5–248; that stretch reads IETINLHVYY…PEHELTEKYV (244 aa). An ATP-binding site is contributed by 37 to 44; the sequence is GPSGCGKS.

Belongs to the ABC transporter superfamily. Phosphate importer (TC 3.A.1.7) family. As to quaternary structure, the complex is composed of two ATP-binding proteins (PstB), two transmembrane proteins (PstC and PstA) and a solute-binding protein (PstS).

The protein resides in the cell membrane. The catalysed reaction is phosphate(out) + ATP + H2O = ADP + 2 phosphate(in) + H(+). Functionally, part of the ABC transporter complex PstSACB involved in phosphate import. Responsible for energy coupling to the transport system. In Pyrococcus furiosus (strain ATCC 43587 / DSM 3638 / JCM 8422 / Vc1), this protein is Phosphate import ATP-binding protein PstB.